The primary structure comprises 422 residues: Replication factor C large subunit (422 aa).

Residue 63-70 participates in ATP binding; that stretch reads GPPGVGKT.

This sequence belongs to the activator 1 small subunits family. RfcL subfamily. Heteromultimer composed of small subunits (RfcS) and large subunits (RfcL).

Its function is as follows. Part of the RFC clamp loader complex which loads the PCNA sliding clamp onto DNA. The protein is Replication factor C large subunit of Pyrobaculum aerophilum (strain ATCC 51768 / DSM 7523 / JCM 9630 / CIP 104966 / NBRC 100827 / IM2).